The following is a 155-amino-acid chain: Secreted RxLR effector protein 38 (155 aa).

The N-terminal stretch at 1–17 (MHLIYIVMAATATTLHA) is a signal peptide. The short motif at 49–64 (RFLRGAYEDVHREEER) is the RxLR-dEER element.

The protein belongs to the RxLR effector family.

The protein resides in the secreted. The protein localises to the host nucleus. It is found in the host cytoplasm. Its function is as follows. Secreted effector that completely suppresses the host cell death induced by cell death-inducing proteins. This chain is Secreted RxLR effector protein 38, found in Plasmopara viticola (Downy mildew of grapevine).